We begin with the raw amino-acid sequence, 625 residues long: Keratin, type II cytoskeletal 1 (625 aa).

Low complexity predominate over residues 1–12 (MSFQCSSRSLCR). The interval 1 to 27 (MSFQCSSRSLCRSGGGGGGRNFSSGSA) is disordered. Positions 1–178 (MSFQCSSRSL…DPQIQKVKSQ (178 aa)) are head. An Omega-N-methylarginine modification is found at arginine 12. Serine 23 and serine 26 each carry phosphoserine. Arginine 51 carries the post-translational modification Omega-N-methylarginine. The residue at position 69 (serine 69) is a Phosphoserine. Residues 171 to 319 (QIQKVKSQER…DIDFFSTLYQ (149 aa)) are a coiled coil. The segment at 179 to 214 (EREQIKSLNDKFASFIDKVRFLEQQNQVLQTKWELL) is coil 1A. The 314-residue stretch at 179–492 (EREQIKSLND…KLLEGEEIRM (314 aa)) folds into the IF rod domain. A linker 1 region spans residues 215-233 (QQVDTSTRTQNLDPFFESY). A coil 1B region spans residues 234 to 325 (ISNLRRQVDS…TLYQMELSQM (92 aa)). Lysine 275 carries the N6,N6-dimethyllysine modification. A linker 12 region spans residues 326–349 (QTQISETNVVLSMDNNRTLDLDGI). Positions 350–488 (IAEVKAQYDS…ATYRKLLEGE (139 aa)) are coil 2. A coiled-coil region spans residues 388–475 (DSVKNTKMEI…ELMNTKLALD (88 aa)). The tail stretch occupies residues 489 to 625 (EIRMSGECTP…VSTTYSRGTN (137 aa)). 2 disordered regions span residues 496–525 (CTPN…YGSG) and 560–625 (SGGG…RGTN). Positions 500–515 (VSVSVSTSHTSMSGTS) are enriched in low complexity. 2 stretches are compositionally biased toward gly residues: residues 516–525 (SRGGGRYGSG) and 560–606 (SGGG…GGVK). Omega-N-methylarginine is present on residues arginine 517, arginine 574, and arginine 596. The segment covering 613 to 625 (VKFVSTTYSRGTN) has biased composition (polar residues).

This sequence belongs to the intermediate filament family. As to quaternary structure, heterotetramer of two type I and two type II keratins. Heterodimer with KRT10. Two heterodimers of KRT1 and KRT10 form a heterotetramer. Forms a heterodimer with KRT14; the interaction is more abundant in the absence of KRT5. Interacts with ITGB1 in the presence of RACK1 and SRC, and with RACK1. Interacts with C1QBP; the association represents a cell surface kininogen receptor. Interacts with EPPK1; interaction is dependent of higher-order structure of intermediate filament. Post-translationally, undergoes deimination of some arginine residues (citrullination).

The protein localises to the cell membrane. The protein resides in the cytoplasm. Its function is as follows. May regulate the activity of kinases such as PKC and SRC via binding to integrin beta-1 (ITB1) and the receptor of activated protein C kinase 1 (RACK1). In complex with C1QBP is a high affinity receptor for kininogen-1/HMWK. This chain is Keratin, type II cytoskeletal 1, found in Rattus norvegicus (Rat).